A 372-amino-acid chain; its full sequence is Alanine dehydrogenase 2 (372 aa).

The active site involves histidine 95. NAD(+) is bound at residue 169–199 (KVTIIGGGQAGTNAAKIALGLGADVTILDVN).

Belongs to the AlaDH/PNT family.

It catalyses the reaction L-alanine + NAD(+) + H2O = pyruvate + NH4(+) + NADH + H(+). Its pathway is amino-acid degradation; L-alanine degradation via dehydrogenase pathway; NH(3) and pyruvate from L-alanine: step 1/1. Functionally, may play a role in cell wall synthesis as L-alanine is an important constituent of the peptidoglycan layer. This Staphylococcus aureus (strain COL) protein is Alanine dehydrogenase 2 (ald2).